A 437-amino-acid polypeptide reads, in one-letter code: tRNA(Ile2) 2-agmatinylcytidine synthetase TiaS (437 aa).

It belongs to the TiaS family.

The protein localises to the cytoplasm. The enzyme catalyses cytidine(34) in tRNA(Ile2) + agmatine + ATP + H2O = 2-agmatinylcytidine(34) in tRNA(Ile2) + AMP + 2 phosphate + 2 H(+). In terms of biological role, ATP-dependent agmatine transferase that catalyzes the formation of 2-agmatinylcytidine (agm2C) at the wobble position (C34) of tRNA(Ile2), converting the codon specificity from AUG to AUA. This chain is tRNA(Ile2) 2-agmatinylcytidine synthetase TiaS, found in Thermoplasma volcanium (strain ATCC 51530 / DSM 4299 / JCM 9571 / NBRC 15438 / GSS1).